Reading from the N-terminus, the 1403-residue chain is Baculoviral IAP repeat-containing protein 1a (1403 aa).

BIR repeat units follow at residues 63–128, 162–228, and 281–346; these read RLKT…EFLQ, RLES…EFLQ, and RMDT…VFLQ. Zn(2+) is bound by residues Cys315, Cys318, His335, and Cys342. The region spanning 464–758 is the NACHT domain; sequence SVMCVEGETG…EFLAAMRLTE (295 aa). Lys476 is a binding site for ATP.

Interacts (via NACHT domain) with APAF1 (via CARD and NACHT domains).

In terms of biological role, anti-apoptotic protein which acts by inhibiting the activities of CASP3, CASP7 and CASP9. Can inhibit the autocleavage of pro-CASP9 and cleavage of pro-CASP3 by CASP9. Capable of inhibiting CASP9 autoproteolysis at 'Asp-315' and decreasing the rate of auto proteolysis at 'Asp-330'. Acts as a mediator of neuronal survival in pathological conditions. Prevents motor-neuron apoptosis induced by a variety of signals. The sequence is that of Baculoviral IAP repeat-containing protein 1a (Naip1) from Mus musculus (Mouse).